The following is a 561-amino-acid chain: Mercuric reductase (561 aa).

In terms of domain architecture, HMA spans 1–65 (MTTLKITGMT…AVAGLGYEAT (65 aa)). Residues cysteine 11 and cysteine 14 each coordinate a metal cation. FAD contacts are provided by alanine 110, glycine 130, and threonine 135. The cysteines at positions 136 and 141 are disulfide-linked. 4 residues coordinate FAD: lysine 145, alanine 211, aspartate 403, and valine 411. Hg(2+)-binding residues include cysteine 558 and cysteine 559.

This sequence belongs to the class-I pyridine nucleotide-disulfide oxidoreductase family. As to quaternary structure, homodimer. Requires FAD as cofactor.

It catalyses the reaction Hg + NADP(+) + H(+) = Hg(2+) + NADPH. Functionally, resistance to Hg(2+) in bacteria appears to be governed by a specialized system which includes mercuric reductase. MerA protein is responsible for volatilizing mercury as Hg(0). The chain is Mercuric reductase (merA) from Enterobacter agglomerans (Erwinia herbicola).